A 91-amino-acid chain; its full sequence is Small ribosomal subunit protein uS19 (91 aa).

The protein belongs to the universal ribosomal protein uS19 family.

Functionally, protein S19 forms a complex with S13 that binds strongly to the 16S ribosomal RNA. The sequence is that of Small ribosomal subunit protein uS19 from Synechococcus elongatus (strain ATCC 33912 / PCC 7942 / FACHB-805) (Anacystis nidulans R2).